Reading from the N-terminus, the 353-residue chain is Keratocan (353 aa).

The signal sequence occupies residues 1-21 (MMTLKVCPSLLLLFLVHSVWT). The region spanning 34 to 72 (EHWSHYTFECPQECFCPPSFPNALYCDNKGLKEIPAIPA) is the LRRNT domain. Disulfide bonds link C43–C49 and C47–C59. LRR repeat units follow at residues 73 to 94 (RIWYLYLQNNLIETISEKPFVN), 97 to 118 (HLRWINLNKNKITNNGIESGVL), 123 to 143 (RLLYLFLEDNELEEVPAPLPV), 144 to 165 (GLEQLRLARNKISRIPEGVFSN), 168 to 188 (NLTMLDLHQNNLLDSALQSDT), 194 to 214 (SLMQLNIAKNSLKKMPLSIPA), 215 to 236 (NTLQLFLDNNSIEVIPENYFSA), and 239 to 259 (KVTFLRLNYNKLSDEGIPPNG). N-linked (GlcNAc...) (keratan sulfate) asparagine glycosylation occurs at N94. A glycan (N-linked (GlcNAc...) asparagine) is linked at N168. N223 is a glycosylation site (N-linked (GlcNAc...) (keratan sulfate) asparagine). N261 carries an N-linked (GlcNAc...) (keratan sulfate) asparagine glycan. LRR repeat units lie at residues 264–283 (SILDLQLSHNQLTKIPPINA) and 284–305 (HLEHLHLDHNRIKSVNGTQICP). N-linked (GlcNAc...) asparagine glycosylation is present at N299. A disulfide bridge connects residues C304 and C344.

The protein belongs to the small leucine-rich proteoglycan (SLRP) family. SLRP class II subfamily. As to expression, cornea.

It is found in the secreted. Its subcellular location is the extracellular space. The protein resides in the extracellular matrix. Its function is as follows. Plays an important role in generating and maintaining a transparent matrix within the corneal stroma. The chain is Keratocan (KERA) from Coturnix japonica (Japanese quail).